Reading from the N-terminus, the 210-residue chain is Probable septum site-determining protein MinC (210 aa).

Belongs to the MinC family. In terms of assembly, interacts with MinD and FtsZ.

In terms of biological role, cell division inhibitor that blocks the formation of polar Z ring septums. Rapidly oscillates between the poles of the cell to destabilize FtsZ filaments that have formed before they mature into polar Z rings. Prevents FtsZ polymerization. This Clostridium novyi (strain NT) protein is Probable septum site-determining protein MinC.